The chain runs to 338 residues: Very-long-chain 3-oxoacyl-CoA reductase (338 aa).

The chain crosses the membrane as a helical span at residues 20–40 (LSAFLLVMGSIGVGRVIYQTL). Positions 66, 95, 120, 147, 214, 218, 247, and 249 each coordinate NADP(+). Tyr214 functions as the Proton donor in the catalytic mechanism. The Lowers pKa of active site Tyr role is filled by Lys218.

It belongs to the short-chain dehydrogenases/reductases (SDR) family.

It is found in the endoplasmic reticulum membrane. It catalyses the reaction a very-long-chain (3R)-3-hydroxyacyl-CoA + NADP(+) = a very-long-chain 3-oxoacyl-CoA + NADPH + H(+). Its pathway is lipid metabolism; fatty acid biosynthesis. Component of the microsomal membrane bound fatty acid elongation system, which produces the 26-carbon very long-chain fatty acids (VLCFA) from palmitate. Catalyzes the reduction of the 3-ketoacyl-CoA intermediate that is formed in each cycle of fatty acid elongation. VLCFAs serve as precursors for ceramide and sphingolipids. In Laccaria bicolor (strain S238N-H82 / ATCC MYA-4686) (Bicoloured deceiver), this protein is Very-long-chain 3-oxoacyl-CoA reductase.